Consider the following 134-residue polypeptide: MLSPKRTRFRKQHRGRMKGISYRGNHISFGKYALQALEPAWITSRQIEAGRRAMTRNARRGGKIWVRIFPDKPVTLRPAETRMGSGKGSPEYWVAVVKPGRILYEMGGVTENIARRAISLAASKMPIRTQFIIS.

It belongs to the universal ribosomal protein uL16 family. In terms of assembly, part of the 50S ribosomal subunit.

It localises to the plastid. Its subcellular location is the chloroplast. This is Large ribosomal subunit protein uL16c from Atropa belladonna (Belladonna).